The chain runs to 887 residues: Multiple RNA-binding domain-containing protein 1 (887 aa).

In terms of domain architecture, RRM 1 spans 2-94 (SRIIVKGLPV…SKIEVSMAKS (93 aa)). 3 disordered regions span residues 121 to 143 (KLLQ…NIDD), 203 to 276 (KEEN…RNLA), and 297 to 336 (SEAE…DEEL). 2 positions are modified to phosphoserine: Ser220 and Ser264. The segment covering 264-276 (SDEKENEKRRNLA) has biased composition (basic and acidic residues). Positions 306–315 (SSYATEQNES) are enriched in polar residues. Residues 316-325 (LDTKKEEQPE) show a composition bias toward basic and acidic residues. 4 RRM domains span residues 345-423 (GRLF…PGEE), 532-604 (KVIL…RGPK), 663-746 (VSIF…LSHR), and 763-840 (GKII…YAEE). Residues 864–887 (EMAALRNGGGRKKLDVDDEENEGF) are disordered.

It belongs to the RRM MRD1 family. Interacts with NOP1. Binds to the 35S pre-rRNA and the U3 snoRNA.

It is found in the nucleus. In terms of biological role, involved in pre-rRNA processing. Required for maintaining steady-state levels of 40S ribosomal subunit. Required for the initial processing of pre-rRNA at the A0 to A2 sites, leading to the processing of the 23S pre-rRNA intermediate to the 18S rRNA. In Saccharomyces cerevisiae (strain ATCC 204508 / S288c) (Baker's yeast), this protein is Multiple RNA-binding domain-containing protein 1 (MRD1).